The sequence spans 230 residues: Urease accessory protein UreE (230 aa).

Residues H200–T210 are compositionally biased toward basic residues. The interval H200 to H230 is disordered. The segment covering H211–H230 has biased composition (basic and acidic residues).

Belongs to the UreE family.

The protein resides in the cytoplasm. In terms of biological role, involved in urease metallocenter assembly. Binds nickel. Probably functions as a nickel donor during metallocenter assembly. The protein is Urease accessory protein UreE of Yersinia enterocolitica serotype O:8 / biotype 1B (strain NCTC 13174 / 8081).